We begin with the raw amino-acid sequence, 138 residues long: Nucleoside diphosphate kinase (138 aa).

6 residues coordinate ATP: Lys9, Phe57, Arg85, Thr91, Arg102, and Asn112. The active-site Pros-phosphohistidine intermediate is the His115.

The protein belongs to the NDK family. In terms of assembly, homotetramer. The cofactor is Mg(2+).

The protein resides in the cytoplasm. It carries out the reaction a 2'-deoxyribonucleoside 5'-diphosphate + ATP = a 2'-deoxyribonucleoside 5'-triphosphate + ADP. The catalysed reaction is a ribonucleoside 5'-diphosphate + ATP = a ribonucleoside 5'-triphosphate + ADP. Major role in the synthesis of nucleoside triphosphates other than ATP. The ATP gamma phosphate is transferred to the NDP beta phosphate via a ping-pong mechanism, using a phosphorylated active-site intermediate. The polypeptide is Nucleoside diphosphate kinase (Desulfatibacillum aliphaticivorans).